A 374-amino-acid polypeptide reads, in one-letter code: Outer membrane protein F (374 aa).

An N-terminal signal peptide occupies residues 1–21 (MMKRNILAVVIPALLAAGAAN). The chain crosses the membrane as a beta stranded span at residues 22-27 (AAEIYN). A topological domain (periplasmic) is located at residue Lys28. The beta stranded transmembrane segment at 29–44 (DGNKLDLYGKVDGLHY) threads the bilayer. Topologically, residues 45 to 55 (FSKDKGNDGDQ) are extracellular. A beta stranded transmembrane segment spans residues 56 to 68 (TYVRFGFKGETQI). Topologically, residues 69–70 (TD) are periplasmic. Residues 71–83 (QLTGYGQWEYNVQ) form a beta stranded membrane-spanning segment. The Extracellular segment spans residues 84 to 97 (SNHAESQGTEGTKT). A beta stranded membrane pass occupies residues 98–107 (RLGFAGLKFA). At 108–110 (DYG) the chain is on the periplasmic side. A beta stranded membrane pass occupies residues 111 to 116 (SFDYGR). Over 117-151 (NYGVLYDVEGWTDMLPEFGGDTYTYSDNFMTGRTN) the chain is Extracellular. Residues 152 to 158 (GVATYRN) form a beta stranded membrane-spanning segment. The Periplasmic segment spans residues 159-166 (NNFFGLVD). Residues 167–178 (GLNFALQYQGKN) traverse the membrane as a beta stranded segment. Over 179 to 190 (QNDGRDVKKQNG) the chain is Extracellular. Residues 191–201 (DGWGISSTYDI) traverse the membrane as a beta stranded segment. At 202–203 (GE) the chain is on the periplasmic side. The beta stranded transmembrane segment at 204-216 (GVSFGAAYASSNR) threads the bilayer. Residues 217 to 230 (TDDQKLRSNERGDK) lie on the Extracellular side of the membrane. The chain crosses the membrane as a beta stranded span at residues 231 to 242 (ADAWTVGAKYDA). Residue Asn243 is a topological domain, periplasmic. A beta stranded membrane pass occupies residues 244-255 (NVYLAAMYAETR). Topologically, residues 256 to 280 (NMTPFGGGNFTNTCAATENCGGFAS) are extracellular. A beta stranded membrane pass occupies residues 281–293 (KTQNFEVTAQYQF). The Periplasmic portion of the chain corresponds to 294–295 (DF). A beta stranded transmembrane segment spans residues 296–309 (GLRPEVSYLQSKGK). The Extracellular portion of the chain corresponds to 310 to 322 (NLNVPGVGSDQDL). A beta stranded transmembrane segment spans residues 323–334 (VKYVSVGTTYYF). Topologically, residues 335 to 336 (NK) are periplasmic. Residues 337 to 346 (NMSTYVDYKI) traverse the membrane as a beta stranded segment. At 347 to 364 (NLLDDNDFTKATGIATDD) the chain is on the extracellular side. The chain crosses the membrane as a beta stranded span at residues 365-374 (IVGVGLVYQF).

It belongs to the Gram-negative porin family. Homotrimer.

The protein resides in the cell outer membrane. Its function is as follows. Forms pores that allow passive diffusion of small molecules across the outer membrane. The sequence is that of Outer membrane protein F (ompF) from Serratia marcescens.